The chain runs to 193 residues: 7-methyl-GTP pyrophosphatase (193 aa).

The active-site Proton acceptor is Asp-70.

The protein belongs to the Maf family. YceF subfamily. A divalent metal cation serves as cofactor.

Its subcellular location is the cytoplasm. The enzyme catalyses N(7)-methyl-GTP + H2O = N(7)-methyl-GMP + diphosphate + H(+). In terms of biological role, nucleoside triphosphate pyrophosphatase that hydrolyzes 7-methyl-GTP (m(7)GTP). May have a dual role in cell division arrest and in preventing the incorporation of modified nucleotides into cellular nucleic acids. In Aliivibrio fischeri (strain ATCC 700601 / ES114) (Vibrio fischeri), this protein is 7-methyl-GTP pyrophosphatase.